The sequence spans 921 residues: MSLLTQIFGSRNQRLLKQYQKTVREINALEPAMEQLSDAALQAKTPEFKERLAKGEDIDSILPEAFAVCREASKRVLKMRHFDVQLIGGMTLHYGKIAEMGTGEGKTLMATLPTYLNALTGKGVHVVTVNDYLAQRDAEWMGTLYGWLGLSTGVNMSQIDHDAKQIAYNSDITYGTNNEFGFDYLRDNMVYDTADRVQRDLHFAVVDEVDSILIDEARTPLIISGQAENHTELYHKINAVPPLLTLQIGEETPDGKGTVEVPGDYTKDEKAHQVLLTEAGHEKAEQILTRMGLLPEGASLYDAANITLIHHLYAALRAHTLYHKDQHYVVQNDEVVIVDEFTGRLMTGRRWSDGLHQAVEAKEGVRIQNENQTLASITFQNYFRMYSKLAGMTGTADTEAYEFQEIYGLETVVIPQNRPNQRKDRQDQVYKSSEEKYGAMLKDIQDCYERGQPVLVGTTSIENSELLSGILNKANLPHNVLNAKQHAREAEIIAQAGRPKAITIATNMAGRGTDIVLGGNVAKQVQIIEANDALSEAEKTAQAQKLGDEWQSLHDQVVAAGGLHIIGTERHESRRVDNQLRGRAGRQGDPGSSRFYLSLDDALLRIFAGDRVRAIMDRLKMPEGEPIEAGIVSRSIESAQRKVEARNFDIRKQLLEYDDVANDQRKVIYQQRNELLETQDVSELITSLRQGVFADLFRTYVPEQSMEEQWDLKALDEILRNEWQIDFSLAAVLEAEPNITDEEMLERLLQVTDAAYEAKVAIVGRESFAGFERGVMLQSVDSNWREHLAALDHLRQGIHLRGYAQKNPKQEYKREAFELFGQMLNLIKDAVVKTVMTVRIQSREEIDAAEEQLAQAHVENVHYQHADFDPDAAPEELLAPTAQAHEAASQPQVNTMPKVGRNDPCPCGSGKKYKQCHGRLA.

ATP-binding positions include Gln85, 103–107 (GEGKT), and Asp514. 4 residues coordinate Zn(2+): Cys905, Cys907, Cys916, and His917.

Belongs to the SecA family. Monomer and homodimer. Part of the essential Sec protein translocation apparatus which comprises SecA, SecYEG and auxiliary proteins SecDF-YajC and YidC. Requires Zn(2+) as cofactor.

The protein resides in the cell inner membrane. The protein localises to the cytoplasm. The enzyme catalyses ATP + H2O + cellular proteinSide 1 = ADP + phosphate + cellular proteinSide 2.. Functionally, part of the Sec protein translocase complex. Interacts with the SecYEG preprotein conducting channel. Has a central role in coupling the hydrolysis of ATP to the transfer of proteins into and across the cell membrane, serving both as a receptor for the preprotein-SecB complex and as an ATP-driven molecular motor driving the stepwise translocation of polypeptide chains across the membrane. This chain is Protein translocase subunit SecA, found in Herminiimonas arsenicoxydans.